The sequence spans 1463 residues: Collagen alpha-1(III) chain (1463 aa).

A signal peptide spans 1-23; the sequence is MMSFVQCGTWFLLTLLHPSLILA. A propeptide spans 24–154 (N-terminal propeptide); that stretch reads QQSNVDELGC…CPTGGQNYSP (131 aa). A VWFC domain is found at 31 to 90; that stretch reads LGCNYLGQSYESRDVWKPEPCQICVCDSGSVLCDDIMCDDEPLDCPNPEIPFGECCAICP. Positions 97 to 1195 are disordered; sequence PVIPDGNRPQ…PGPPGAPGPC (1099 aa). Positions 147-156 are enriched in polar residues; sequence TGGQNYSPQF. A nonhelical region (N-terminal) region spans residues 155-169; the sequence is QFDSYDVKSGVGGMG. Gly residues predominate over residues 164–173; that stretch reads GVGGMGGYPG. Residues 170–1195 are triple-helical region; it reads GYPGPAGPPG…PGPPGAPGPC (1026 aa). Residues 174-184 are compositionally biased toward pro residues; that stretch reads PAGPPGPPGPP. Positions 186–198 are enriched in low complexity; that stretch reads SSGHPGSPGSPGY. A compositionally biased stretch (basic and acidic residues) spans 228–240; it reads KDGESGRPGRPGE. The segment covering 250 to 259 has biased composition (low complexity); sequence KGPAGIPGFP. At lysine 262 the chain carries 5-hydroxylysine; alternate. Residue lysine 262 is glycosylated (O-linked (Gal...) hydroxylysine; alternate). Residues 265–276 are compositionally biased toward basic and acidic residues; sequence RGFDGRNGEKGE. Lysine 283 is modified (5-hydroxylysine). Composition is skewed to low complexity over residues 310–321 and 354–379; these read PGLPGAAGARGN and PAGS…AGAQ. The span at 389–398 shows a compositional bias: gly residues; that stretch reads GSPGGKGEMG. Composition is skewed to low complexity over residues 399-429 and 481-502; these read PAGI…QRGP and PGER…PGEK. A compositionally biased stretch (gly residues) spans 527–548; that stretch reads GTPGGPGIRGMPGSPGGPGNDG. Composition is skewed to low complexity over residues 606-615 and 637-652; these read PAGKNGETGP and QGLQ…PGEN. Gly residues predominate over residues 668–677; sequence GVPGGKGDSG. Over residues 678 to 691 the composition is skewed to low complexity; the sequence is APGERGPPGTAGTP. The span at 692–708 shows a compositional bias: gly residues; the sequence is GLRGGAGPPGPEGGKGP. Positions 709 to 718 are enriched in pro residues; it reads AGPPGPPGTS. Residues 822-834 are compositionally biased toward basic and acidic residues; that stretch reads AKGERGAPGEKGE. Residues 835 to 849 are compositionally biased toward gly residues; that stretch reads GGPPGAAGPPGGSGP. The residue at position 859 (lysine 859) is a 5-hydroxylysine. The span at 863–879 shows a compositional bias: gly residues; sequence GSPGGPGAAGFPGGRGL. A compositionally biased stretch (pro residues) spans 889–906; sequence PGPPGPSGAPGKDGPPGP. Composition is skewed to low complexity over residues 907 to 934 and 945 to 960; these read AGNS…KGPP and PLGI…LAGP. Lysine 976 is modified (5-hydroxylysine). Positions 1045-1054 are enriched in pro residues; sequence PGHPGPPGPV. Positions 1068–1084 are enriched in low complexity; the sequence is PAGPSGAPGPAGARGAP. 2 positions are modified to 5-hydroxylysine: lysine 1093 and lysine 1105. Low complexity predominate over residues 1120 to 1132; that stretch reads PGAAGHQGAVGSP. Pro residues predominate over residues 1180–1192; it reads PGQPGPPGPPGAP. Positions 1219 to 1463 are cleaved as a propeptide — C-terminal propeptide; sequence DDPMDFKINT…GVDIGPVCFL (245 aa). Positions 1229-1463 constitute a Fibrillar collagen NC1 domain; sequence EEIMSSLKSV…GVDIGPVCFL (235 aa). Disulfide bonds link cysteine 1259–cysteine 1291, cysteine 1299–cysteine 1461, and cysteine 1369–cysteine 1414. Residues aspartate 1277, asparagine 1279, glutamine 1280, cysteine 1282, and aspartate 1285 each coordinate Ca(2+).

Belongs to the fibrillar collagen family. As to quaternary structure, trimers of identical alpha 1(III) chains. The chains are linked to each other by interchain disulfide bonds. Trimers are also cross-linked via hydroxylysines. Interacts with ADGRG1. In terms of processing, O-glycosylated. Post-translationally, prolines at the third position of the tripeptide repeating unit (G-X-Y) are hydroxylated in some or all of the chains.

It is found in the secreted. The protein resides in the extracellular space. It localises to the extracellular matrix. Collagen type III occurs in most soft connective tissues along with type I collagen. Involved in regulation of cortical development. Is the major ligand of ADGRG1 in the developing brain and binding to ADGRG1 inhibits neuronal migration and activates the RhoA pathway by coupling ADGRG1 to GNA13 and possibly GNA12. In Rattus norvegicus (Rat), this protein is Collagen alpha-1(III) chain (Col3a1).